Reading from the N-terminus, the 68-residue chain is Adipokinetic prohormone type 1 (68 aa).

Positions 1–20 (MNYVSIFVLIVACLCVLADA) are cleaved as a signal peptide. Gln-21 bears the Pyrrolidone carboxylic acid mark. Residue Gly-30 is modified to Glycine amide. Residues 34-68 (GAVAATMSCRSEETIAAIYKLIQNEAERLLLCQKP) constitute a propeptide that is removed on maturation.

Expressed in antennal lobe (AL), corpora cardiaca (CC), corpora allata (CA) and gnathal ganglion (GNG) (at protein level). Expression in CC and CA detected in all animals, expression in GNG in some animals and in AL in few animals (at protein level).

It localises to the secreted. This hormone, released from cells in the corpora cardiaca, causes release of diglycerides from the fat body and stimulation of muscles to use these diglycerides as an energy source during energy-demanding processes. In Agrotis ipsilon (Black cutworm moth), this protein is Adipokinetic prohormone type 1.